Reading from the N-terminus, the 557-residue chain is Formate--tetrahydrofolate ligase 2 (557 aa).

Residue 66 to 73 (TPAGEGKT) participates in ATP binding.

Belongs to the formate--tetrahydrofolate ligase family.

The catalysed reaction is (6S)-5,6,7,8-tetrahydrofolate + formate + ATP = (6R)-10-formyltetrahydrofolate + ADP + phosphate. It participates in one-carbon metabolism; tetrahydrofolate interconversion. This Streptococcus pyogenes serotype M6 (strain ATCC BAA-946 / MGAS10394) protein is Formate--tetrahydrofolate ligase 2.